We begin with the raw amino-acid sequence, 318 residues long: NADH-ubiquinone oxidoreductase chain 1 (318 aa).

Transmembrane regions (helical) follow at residues 2–22, 70–90, 98–118, 140–160, 173–193, 217–237, 253–273, and 294–314; these read FTINLLLLITPALIAMAFLTL, LYMAAPTLALTIALLLWTPLP, FNLGLLFVLATSSLAVYSILW, ISYGVTLAIILLSTLLMSGSF, WLLLPSWPLTMMWFISTLAET, AGSFALFFMAEYMNIIMMNAL, ELYTMNFMTKTLLLTILFLWI, and LPLTLALCMWYISMPMLLSGI.

It belongs to the complex I subunit 1 family.

It localises to the mitochondrion inner membrane. It catalyses the reaction a ubiquinone + NADH + 5 H(+)(in) = a ubiquinol + NAD(+) + 4 H(+)(out). Functionally, core subunit of the mitochondrial membrane respiratory chain NADH dehydrogenase (Complex I) that is believed to belong to the minimal assembly required for catalysis. Complex I functions in the transfer of electrons from NADH to the respiratory chain. The immediate electron acceptor for the enzyme is believed to be ubiquinone. The polypeptide is NADH-ubiquinone oxidoreductase chain 1 (MT-ND1) (Sapajus apella (Brown-capped capuchin)).